We begin with the raw amino-acid sequence, 309 residues long: Isoflavone reductase homolog IRL (309 aa).

Residues 12 to 18, Arg37, and Lys46 each bind NADP(+); that span reads GGTGYLG. Lys134 serves as the catalytic Proton acceptor. Arg138 is an NADP(+) binding site.

Belongs to the NmrA-type oxidoreductase family. Isoflavone reductase subfamily. In terms of assembly, monomer.

It is found in the cytoplasm. Its pathway is alkaloid biosynthesis. Reductase that may be involved in a late step of alkaloid biosynthesis. This Zea mays (Maize) protein is Isoflavone reductase homolog IRL.